A 258-amino-acid polypeptide reads, in one-letter code: UPF0246 protein PM0066 (258 aa).

Belongs to the UPF0246 family.

In Pasteurella multocida (strain Pm70), this protein is UPF0246 protein PM0066.